The following is a 142-amino-acid chain: Large ribosomal subunit protein bL17 (142 aa).

Belongs to the bacterial ribosomal protein bL17 family. Part of the 50S ribosomal subunit. Contacts protein L32.

The polypeptide is Large ribosomal subunit protein bL17 (Wolbachia pipientis subsp. Culex pipiens (strain wPip)).